Here is a 175-residue protein sequence, read N- to C-terminus: Peptidyl-prolyl cis-trans isomerase B (175 aa).

One can recognise a PPIase cyclophilin-type domain in the interval 3–172 (EQLYATLKTN…EDVVIESVVV (170 aa)).

Belongs to the cyclophilin-type PPIase family.

It is found in the cytoplasm. It carries out the reaction [protein]-peptidylproline (omega=180) = [protein]-peptidylproline (omega=0). With respect to regulation, inhibited by cyclosporin A (CsA). In terms of biological role, PPIases accelerate the folding of proteins. It catalyzes the cis-trans isomerization of proline imidic peptide bonds in oligopeptides. In Streptomyces anulatus (Streptomyces chrysomallus), this protein is Peptidyl-prolyl cis-trans isomerase B (cypB).